Consider the following 193-residue polypeptide: Peptidyl-tRNA hydrolase (193 aa).

Residue Y16 coordinates tRNA. The active-site Proton acceptor is the H21. TRNA-binding residues include F67, N69, and N115.

It belongs to the PTH family. As to quaternary structure, monomer.

The protein localises to the cytoplasm. It catalyses the reaction an N-acyl-L-alpha-aminoacyl-tRNA + H2O = an N-acyl-L-amino acid + a tRNA + H(+). Functionally, hydrolyzes ribosome-free peptidyl-tRNAs (with 1 or more amino acids incorporated), which drop off the ribosome during protein synthesis, or as a result of ribosome stalling. In terms of biological role, catalyzes the release of premature peptidyl moieties from peptidyl-tRNA molecules trapped in stalled 50S ribosomal subunits, and thus maintains levels of free tRNAs and 50S ribosomes. The chain is Peptidyl-tRNA hydrolase from Psychrobacter arcticus (strain DSM 17307 / VKM B-2377 / 273-4).